The chain runs to 186 residues: Ribosome-recycling factor (186 aa).

The protein belongs to the RRF family.

It is found in the cytoplasm. Functionally, responsible for the release of ribosomes from messenger RNA at the termination of protein biosynthesis. May increase the efficiency of translation by recycling ribosomes from one round of translation to another. The protein is Ribosome-recycling factor of Chelativorans sp. (strain BNC1).